Here is a 229-residue protein sequence, read N- to C-terminus: ATP-dependent dethiobiotin synthetase BioD (229 aa).

Residue Gly-12–Val-17 participates in ATP binding. Thr-16 lines the Mg(2+) pocket. Lys-37 is an active-site residue. Thr-41 is a substrate binding site. ATP contacts are provided by residues Asp-53, Glu-112–Gly-115, and Pro-201–Gly-203. Residues Asp-53 and Glu-112 each contribute to the Mg(2+) site.

This sequence belongs to the dethiobiotin synthetase family. Homodimer. Requires Mg(2+) as cofactor.

The protein localises to the cytoplasm. It catalyses the reaction (7R,8S)-7,8-diammoniononanoate + CO2 + ATP = (4R,5S)-dethiobiotin + ADP + phosphate + 3 H(+). Its pathway is cofactor biosynthesis; biotin biosynthesis; biotin from 7,8-diaminononanoate: step 1/2. In terms of biological role, catalyzes a mechanistically unusual reaction, the ATP-dependent insertion of CO2 between the N7 and N8 nitrogen atoms of 7,8-diaminopelargonic acid (DAPA, also called 7,8-diammoniononanoate) to form a ureido ring. This chain is ATP-dependent dethiobiotin synthetase BioD, found in Mycobacterium sp. (strain KMS).